Here is a 565-residue protein sequence, read N- to C-terminus: Mitochondrial distribution and morphology protein 34 (565 aa).

One can recognise an SMP-LTD domain in the interval 1 to 195 (MAFNFNWSPL…LPAIIHRLSL (195 aa)). Disordered regions lie at residues 207–236 (EDQD…VDAL), 296–317 (PSDQ…LSRT), and 348–504 (STYG…RQLP). Positions 358–370 (RHSKAHARKRKKR) are enriched in basic residues. Basic and acidic residues predominate over residues 371-381 (VVDLRRPKQPE). A compositionally biased stretch (polar residues) spans 382–401 (SETASVTDESSFTETTSAPS). 2 stretches are compositionally biased toward basic and acidic residues: residues 446-472 (LRRD…HAEV) and 483-496 (IRHE…EKQE).

The protein belongs to the MDM34 family. As to quaternary structure, component of the ER-mitochondria encounter structure (ERMES) or MDM complex, composed of mmm1, mdm10, mdm12 and mdm34.

The protein resides in the mitochondrion outer membrane. In terms of biological role, component of the ERMES/MDM complex, which serves as a molecular tether to connect the endoplasmic reticulum (ER) and mitochondria. Components of this complex are involved in the control of mitochondrial shape and protein biogenesis, and function in nonvesicular lipid trafficking between the ER and mitochondria. Mdm34 is required for the interaction of the ER-resident membrane protein mmm1 and the outer mitochondrial membrane-resident beta-barrel protein mdm10. This chain is Mitochondrial distribution and morphology protein 34, found in Aspergillus terreus (strain NIH 2624 / FGSC A1156).